Reading from the N-terminus, the 109-residue chain is Staphostatin B (109 aa).

The interval 97–101 (IGTSR) is binds to staphopain B.

It belongs to the protease inhibitor I57 (SspC) family. Forms a stable non-covalent complex with prematurely activated/folded SspB.

It localises to the cytoplasm. Its function is as follows. Specifically inhibits the cysteine protease staphopain B (SspB) by blocking the active site of the enzyme. Probably required to protect cytoplasmic proteins from being degraded by prematurely activated/folded prostaphopain B. Also involved in growth capacity, viability and bacterial morphology. In Staphylococcus aureus (strain MRSA252), this protein is Staphostatin B (sspC).